Here is a 198-residue protein sequence, read N- to C-terminus: Ribonuclease HII (198 aa).

One can recognise an RNase H type-2 domain in the interval 14-198; sequence HMIVGVDEAG…FAPVAQLQLV (185 aa). Residues Asp-20, Glu-21, and Asp-110 each contribute to the a divalent metal cation site.

This sequence belongs to the RNase HII family. Requires Mn(2+) as cofactor. It depends on Mg(2+) as a cofactor.

It is found in the cytoplasm. The enzyme catalyses Endonucleolytic cleavage to 5'-phosphomonoester.. Endonuclease that specifically degrades the RNA of RNA-DNA hybrids. This is Ribonuclease HII from Sphingopyxis alaskensis (strain DSM 13593 / LMG 18877 / RB2256) (Sphingomonas alaskensis).